A 95-amino-acid polypeptide reads, in one-letter code: MALKPLHDRVLVRRTESEEKTAGGLIIPDSAKEKPSEGVVVACGEGARKDSGELIAMAVKSGDRVLFGKWSGTEVTVDGEELLMMKESDIMGIIE.

The protein belongs to the GroES chaperonin family. As to quaternary structure, heptamer of 7 subunits arranged in a ring. Interacts with the chaperonin GroEL.

It localises to the cytoplasm. Functionally, together with the chaperonin GroEL, plays an essential role in assisting protein folding. The GroEL-GroES system forms a nano-cage that allows encapsulation of the non-native substrate proteins and provides a physical environment optimized to promote and accelerate protein folding. GroES binds to the apical surface of the GroEL ring, thereby capping the opening of the GroEL channel. This is Co-chaperonin GroES from Ruegeria pomeroyi (strain ATCC 700808 / DSM 15171 / DSS-3) (Silicibacter pomeroyi).